A 357-amino-acid chain; its full sequence is S-adenosylmethionine:tRNA ribosyltransferase-isomerase (357 aa).

It belongs to the QueA family. As to quaternary structure, monomer.

Its subcellular location is the cytoplasm. The catalysed reaction is 7-aminomethyl-7-carbaguanosine(34) in tRNA + S-adenosyl-L-methionine = epoxyqueuosine(34) in tRNA + adenine + L-methionine + 2 H(+). It participates in tRNA modification; tRNA-queuosine biosynthesis. Functionally, transfers and isomerizes the ribose moiety from AdoMet to the 7-aminomethyl group of 7-deazaguanine (preQ1-tRNA) to give epoxyqueuosine (oQ-tRNA). The polypeptide is S-adenosylmethionine:tRNA ribosyltransferase-isomerase (Buchnera aphidicola subsp. Schizaphis graminum (strain Sg)).